A 197-amino-acid polypeptide reads, in one-letter code: Phosphoheptose isomerase (197 aa).

Residues 37 to 197 (MLQCLMNDGK…CIDSVLLEGM (161 aa)) enclose the SIS domain. Position 52–54 (52–54 (NGG)) interacts with substrate. Residues His-61 and Glu-65 each contribute to the Zn(2+) site. Substrate-binding positions include Glu-65, 94-95 (ND), 120-122 (STS), Ser-125, and Gln-175. Zn(2+) contacts are provided by Gln-175 and His-183.

This sequence belongs to the SIS family. GmhA subfamily. Homotetramer. It depends on Zn(2+) as a cofactor.

It is found in the cytoplasm. The enzyme catalyses 2 D-sedoheptulose 7-phosphate = D-glycero-alpha-D-manno-heptose 7-phosphate + D-glycero-beta-D-manno-heptose 7-phosphate. It participates in carbohydrate biosynthesis; D-glycero-D-manno-heptose 7-phosphate biosynthesis; D-glycero-alpha-D-manno-heptose 7-phosphate and D-glycero-beta-D-manno-heptose 7-phosphate from sedoheptulose 7-phosphate: step 1/1. Catalyzes the isomerization of sedoheptulose 7-phosphate in D-glycero-D-manno-heptose 7-phosphate. The chain is Phosphoheptose isomerase from Neisseria gonorrhoeae (strain ATCC 700825 / FA 1090).